We begin with the raw amino-acid sequence, 651 residues long: Translation factor GUF1 homolog, mitochondrial (651 aa).

The transit peptide at 1 to 26 (MAVTRAAAPMVGNCSSAMLIIGRRYF) directs the protein to the mitochondrion. Residues 51 to 228 (KKIRNFGIVA…AVVERLPPPK (178 aa)) enclose the tr-type G domain. GTP contacts are provided by residues 60 to 67 (AHVDHGKS), 121 to 125 (DTPGH), and 175 to 178 (NKVD).

The protein belongs to the TRAFAC class translation factor GTPase superfamily. Classic translation factor GTPase family. LepA subfamily.

The protein localises to the mitochondrion inner membrane. The catalysed reaction is GTP + H2O = GDP + phosphate + H(+). In terms of biological role, promotes mitochondrial protein synthesis. May act as a fidelity factor of the translation reaction, by catalyzing a one-codon backward translocation of tRNAs on improperly translocated ribosomes. Binds to mitochondrial ribosomes in a GTP-dependent manner. This Brugia malayi (Filarial nematode worm) protein is Translation factor GUF1 homolog, mitochondrial.